A 335-amino-acid polypeptide reads, in one-letter code: Glycerol-3-phosphate dehydrogenase [NAD(P)+] (335 aa).

Ser-12, Trp-13, Arg-33, Arg-34, and Lys-107 together coordinate NADPH. Residues Lys-107, Gly-134, and Ser-136 each coordinate sn-glycerol 3-phosphate. Ala-138 contacts NADPH. Sn-glycerol 3-phosphate contacts are provided by Lys-189, Asp-242, Ser-252, Arg-253, and Asn-254. Residue Lys-189 is the Proton acceptor of the active site. Arg-253 contacts NADPH. NADPH-binding residues include Val-277 and Glu-279.

This sequence belongs to the NAD-dependent glycerol-3-phosphate dehydrogenase family.

The protein localises to the cytoplasm. The enzyme catalyses sn-glycerol 3-phosphate + NAD(+) = dihydroxyacetone phosphate + NADH + H(+). It catalyses the reaction sn-glycerol 3-phosphate + NADP(+) = dihydroxyacetone phosphate + NADPH + H(+). It functions in the pathway membrane lipid metabolism; glycerophospholipid metabolism. Functionally, catalyzes the reduction of the glycolytic intermediate dihydroxyacetone phosphate (DHAP) to sn-glycerol 3-phosphate (G3P), the key precursor for phospholipid synthesis. In Moorella thermoacetica (strain ATCC 39073 / JCM 9320), this protein is Glycerol-3-phosphate dehydrogenase [NAD(P)+].